Reading from the N-terminus, the 149-residue chain is Arginine repressor (149 aa).

Belongs to the ArgR family.

It is found in the cytoplasm. Its pathway is amino-acid biosynthesis; L-arginine biosynthesis [regulation]. Regulates arginine biosynthesis genes. The chain is Arginine repressor from Geobacillus thermodenitrificans (strain NG80-2).